The primary structure comprises 123 residues: Protein Wnt-3 (123 aa).

S1 carries the O-palmitoleoyl serine; by PORCN lipid modification. C89 and C104 are joined by a disulfide. N90 carries an N-linked (GlcNAc...) asparagine glycan.

It belongs to the Wnt family. In terms of processing, palmitoleoylation is required for efficient binding to frizzled receptors. Depalmitoleoylation leads to Wnt signaling pathway inhibition.

It is found in the secreted. The protein resides in the extracellular space. It localises to the extracellular matrix. Its function is as follows. Ligand for members of the frizzled family of seven transmembrane receptors. Functions in the canonical Wnt signaling pathway that results in activation of transcription factors of the TCF/LEF family. Required for normal embryonic development. The polypeptide is Protein Wnt-3 (WNT-3) (Eptatretus stoutii (Pacific hagfish)).